Consider the following 424-residue polypeptide: Histidine--tRNA ligase (424 aa).

This sequence belongs to the class-II aminoacyl-tRNA synthetase family. In terms of assembly, homodimer.

The protein localises to the cytoplasm. It catalyses the reaction tRNA(His) + L-histidine + ATP = L-histidyl-tRNA(His) + AMP + diphosphate + H(+). This is Histidine--tRNA ligase from Shigella sonnei (strain Ss046).